Consider the following 243-residue polypeptide: Triosephosphate isomerase (243 aa).

Residue 9 to 11 (NWK) participates in substrate binding. The active-site Electrophile is His-96. Glu-165 acts as the Proton acceptor in catalysis. Substrate-binding positions include Gly-171, Ser-204, and 225-226 (GG).

This sequence belongs to the triosephosphate isomerase family. In terms of assembly, homodimer.

Its subcellular location is the cytoplasm. The enzyme catalyses D-glyceraldehyde 3-phosphate = dihydroxyacetone phosphate. It participates in carbohydrate biosynthesis; gluconeogenesis. It functions in the pathway carbohydrate degradation; glycolysis; D-glyceraldehyde 3-phosphate from glycerone phosphate: step 1/1. Involved in the gluconeogenesis. Catalyzes stereospecifically the conversion of dihydroxyacetone phosphate (DHAP) to D-glyceraldehyde-3-phosphate (G3P). This is Triosephosphate isomerase from Prochlorococcus marinus (strain MIT 9211).